A 219-amino-acid chain; its full sequence is Probable transaldolase (219 aa).

The Schiff-base intermediate with substrate role is filled by Lys-83.

This sequence belongs to the transaldolase family. Type 3B subfamily.

The protein resides in the cytoplasm. The catalysed reaction is D-sedoheptulose 7-phosphate + D-glyceraldehyde 3-phosphate = D-erythrose 4-phosphate + beta-D-fructose 6-phosphate. It functions in the pathway carbohydrate degradation; pentose phosphate pathway; D-glyceraldehyde 3-phosphate and beta-D-fructose 6-phosphate from D-ribose 5-phosphate and D-xylulose 5-phosphate (non-oxidative stage): step 2/3. Its function is as follows. Transaldolase is important for the balance of metabolites in the pentose-phosphate pathway. The polypeptide is Probable transaldolase (Cereibacter sphaeroides (strain ATCC 17029 / ATH 2.4.9) (Rhodobacter sphaeroides)).